We begin with the raw amino-acid sequence, 147 residues long: Response regulator Rcp1 (147 aa).

The Response regulatory domain maps to 10–135 (VILLVEDSKA…DLFKMVQGIE (126 aa)). Residue aspartate 68 is modified to 4-aspartylphosphate.

Phosphorylated by Cph1.

Forms a two-component system with Cph1 in which it acts as receiver substrate. This chain is Response regulator Rcp1 (rcp1), found in Synechocystis sp. (strain ATCC 27184 / PCC 6803 / Kazusa).